The following is a 107-amino-acid chain: UPF0145 protein YbjQ (107 aa).

This sequence belongs to the UPF0145 family.

In Shigella flexneri, this protein is UPF0145 protein YbjQ.